We begin with the raw amino-acid sequence, 530 residues long: Regulatory protein LuxO (530 aa).

One can recognise a Sigma-54 factor interaction domain in the interval I194–L423. ATP contacts are provided by residues G222–E229 and A285–E294.

Its function is as follows. Involved in the regulation of different processes depending on the cell density. Acts together with sigma-54 to repress, perhaps indirectly, some genes. The protein is Regulatory protein LuxO (luxO) of Vibrio cholerae serotype O1 (strain ATCC 39541 / Classical Ogawa 395 / O395).